The sequence spans 223 residues: MSQTAIIIWIVVIIILLVLGGLGAYFFYSRYRHRKNIPPTPINPPSSITPIQPINPPSSITPIQPSGPPSGGNHPIPASCPAYQLVNNKAITLVPLPADTSNVKNAQDCQNLCTQNPDCYFYNYVGLFDGCSLMQGTVDNNVMTGFAIRGSEDGCPKWARYNTSIQGFNTGNPSNVESEEKCQQLCQQNSSCDWYTYDIGKKTCTLNKAIDFNTSTLGIKMPH.

Residues 1–23 form the signal peptide; that stretch reads MSQTAIIIWIVVIIILLVLGGLG. Residues 39-73 form a disordered region; the sequence is PTPINPPSSITPIQPINPPSSITPIQPSGPPSGGN. Over residues 45–64 the composition is skewed to low complexity; the sequence is PSSITPIQPINPPSSITPIQ. 2 consecutive PAN domains span residues 80–155 and 159–223; these read CPAY…EDGC and ARYN…KMPH. Disulfide bonds link cysteine 80-cysteine 155 and cysteine 109-cysteine 131. Asparagine 162, asparagine 189, and asparagine 213 each carry an N-linked (GlcNAc...) asparagine; by host glycan. Cysteine 182 and cysteine 204 are disulfide-bonded.

It is found in the secreted. Its subcellular location is the virion. In Acanthamoeba polyphaga mimivirus (APMV), this protein is Putative PAN domain-containing protein R486.